Here is a 173-residue protein sequence, read N- to C-terminus: Mesencephalic astrocyte-derived neurotrophic factor homolog (173 aa).

The N-terminal stretch at methionine 1–alanine 22 is a signal peptide. 4 disulfide bridges follow: cysteine 28–cysteine 114, cysteine 31–cysteine 103, cysteine 61–cysteine 72, and cysteine 148–cysteine 151.

It belongs to the ARMET family.

Its subcellular location is the secreted. In terms of biological role, required during the maturation of the embryonic nervous system for maintenance of neuronal and cuticular connectivity. Essential for maintenance of dopaminergic neurons and dopamine levels. The sequence is that of Mesencephalic astrocyte-derived neurotrophic factor homolog from Drosophila ananassae (Fruit fly).